We begin with the raw amino-acid sequence, 489 residues long: Major aspartyl peptidase 1 (489 aa).

Residues 1 to 16 (MHYLAVALPLLTLALA) form the signal peptide. A Peptidase A1 domain is found at 101 to 432 (YAGQVSIGTP…RYNPAAIGFA (332 aa)). Residue aspartate 119 is part of the active site. Glycine 121 provides a ligand contact to pepstatin A. Cysteine 132 and cysteine 137 are disulfide-bonded. Residues threonine 161, glycine 163, and serine 164 each coordinate pepstatin A. Asparagine 266 is a glycosylation site (N-linked (GlcNAc...) asparagine). Residue tyrosine 286 participates in pepstatin A binding. Aspartate 317 is an active-site residue. Pepstatin A contacts are provided by threonine 320 and threonine 321. Cysteine 357 and cysteine 391 are joined by a disulfide. Residues 442 to 466 (AGNPSSSTTGGGTSGSNGGGSSSGA) are disordered. Positions 450 to 463 (TGGGTSGSNGGGSS) are enriched in gly residues. Positions 456–489 (GSNGGGSSSGAMERKGVQLGWLVGAVAVGVAAMI) are cleaved as a propeptide — removed at pH 5.0; by autocatalysis.

This sequence belongs to the peptidase A1 family. Monomer. In terms of processing, activated by the autocatalytic cleavage of the propeptide. Cleaved at the end of the propeptide promiscuously from residue 76 to residue 79. C-terminal cleavage by autocatalysis at Gly-456 at the pH optimum indicating a possible regulatory or other function of this propeptide.

The protein localises to the secreted. With respect to regulation, activated by low pH. Inhibited by pepstatin A with an IC(50) of 1.4 nM. Inhibited by acetyl pepstatin. Inhibited by HIV antiretroviral therapy protease inhibitors including amprenavir and ritonavir. Inhibited by HIV-1 protease inhibitor brecanavir with an approximate IC(50) of 352 nM. Inhibited by HIV-1 protease inhibitors CGP53437 and GS-8374. From the tested peptidomimetic inhibitor molecules, macrocycles containing P2-P3' tethered side chains, statines in P1 and an alpha amino acid in P2' are the best. From the linear peptidomimetic inhibitors, the ones with a phenylstatine or hydroxyethylamine scissile bond isoster are better than compounds with a reduced bond or a homo-amide. Overall, inhibitors with a phenylalanine side chain, either unsubstituted or with a small substituent, is preferred in P1 while a bulkier P1 side chain leads to lower inhibition. Its function is as follows. Possesses prevalent extracellular endopeptidase activity at low pH condition. Required for high-density growth in acidic environments. Broad substrate specificity with preference cleavage of the peptide substrate between hydrophobic amino acids. Cleaves substrate at P1-P1' between Phe-Leu. Positively charged amino acids are preferred at P2. Prefers hydrophobic amino acids at the P3 and P4 positions. Cleaves substrate also at P1'-P2' between Leu-Val to some degree. Required for virulence in mouse inhalation model of infection. This chain is Major aspartyl peptidase 1, found in Cryptococcus neoformans var. grubii serotype A (strain H99 / ATCC 208821 / CBS 10515 / FGSC 9487) (Filobasidiella neoformans var. grubii).